We begin with the raw amino-acid sequence, 192 residues long: GTP cyclohydrolase-2 (192 aa).

Residue 50–54 participates in GTP binding; the sequence is RLHSE. Zn(2+)-binding residues include Cys55, Cys66, and Cys68. GTP contacts are provided by residues 92–94 and Thr114; that span reads EGR. Residue Asp126 is the Proton acceptor of the active site. Residue Arg128 is the Nucleophile of the active site. GTP contacts are provided by Thr149 and Lys154.

It belongs to the GTP cyclohydrolase II family. It depends on Zn(2+) as a cofactor.

The enzyme catalyses GTP + 4 H2O = 2,5-diamino-6-hydroxy-4-(5-phosphoribosylamino)-pyrimidine + formate + 2 phosphate + 3 H(+). It functions in the pathway cofactor biosynthesis; riboflavin biosynthesis; 5-amino-6-(D-ribitylamino)uracil from GTP: step 1/4. Its function is as follows. Catalyzes the conversion of GTP to 2,5-diamino-6-ribosylamino-4(3H)-pyrimidinone 5'-phosphate (DARP), formate and pyrophosphate. The sequence is that of GTP cyclohydrolase-2 from Helicobacter pylori (strain Shi470).